We begin with the raw amino-acid sequence, 196 residues long: ATP-dependent Clp protease proteolytic subunit (196 aa).

Catalysis depends on S96, which acts as the Nucleophile. The active site involves H121.

The protein belongs to the peptidase S14 family. In terms of assembly, fourteen ClpP subunits assemble into 2 heptameric rings which stack back to back to give a disk-like structure with a central cavity, resembling the structure of eukaryotic proteasomes.

Its subcellular location is the cytoplasm. It carries out the reaction Hydrolysis of proteins to small peptides in the presence of ATP and magnesium. alpha-casein is the usual test substrate. In the absence of ATP, only oligopeptides shorter than five residues are hydrolyzed (such as succinyl-Leu-Tyr-|-NHMec, and Leu-Tyr-Leu-|-Tyr-Trp, in which cleavage of the -Tyr-|-Leu- and -Tyr-|-Trp bonds also occurs).. Cleaves peptides in various proteins in a process that requires ATP hydrolysis. Has a chymotrypsin-like activity. Plays a major role in the degradation of misfolded proteins. In Streptococcus sanguinis (strain SK36), this protein is ATP-dependent Clp protease proteolytic subunit.